Consider the following 82-residue polypeptide: Antimicrobial peptide Smp43 (82 aa).

Residues 1 to 22 (MNRKLLLVTLMVTMLVMQPAEA) form the signal peptide. The propeptide occupies 66 to 82 (EAGQMPFDEFMDILYES).

It belongs to the non-disulfide-bridged peptide (NDBP) superfamily. Long chain multifunctional peptide (group 2) family. In terms of tissue distribution, expressed by the venom gland.

It localises to the secreted. It is found in the target cell membrane. In terms of biological role, antimicrobial peptide with moderate activity against Gram-positive bacteria and Gram-negative bacteria, as well as low activity against fungi. Acts by inducing bacterial membrane disruption. Shows activity against B.subtilis (MIC=4 ug/ml), S.epidermidis (MIC=64 ug/ml), S.aureus (MIC=32 ug/ml), E.coli (MIC=128 ug/ml), K.pneumoniae (MIC=64 ug/ml), P.aeruginosa (MIC=64 ug/ml), and C.albicans (MIC=128 ug/ml). Does not show hemolysis activity. The chain is Antimicrobial peptide Smp43 from Scorpio palmatus (Israeli golden scorpion).